A 297-amino-acid chain; its full sequence is Homoserine kinase (297 aa).

Residue 82–92 participates in ATP binding; the sequence is PLTRGLGSSAS.

It belongs to the GHMP kinase family. Homoserine kinase subfamily.

It localises to the cytoplasm. The catalysed reaction is L-homoserine + ATP = O-phospho-L-homoserine + ADP + H(+). It participates in amino-acid biosynthesis; L-threonine biosynthesis; L-threonine from L-aspartate: step 4/5. In terms of biological role, catalyzes the ATP-dependent phosphorylation of L-homoserine to L-homoserine phosphate. The polypeptide is Homoserine kinase (Bacillus thuringiensis subsp. konkukian (strain 97-27)).